The primary structure comprises 265 residues: Glutamate racemase (265 aa).

Substrate-binding positions include 9–10 (DS) and 41–42 (YS). The Proton donor/acceptor role is filled by cysteine 73. 74–75 (NT) provides a ligand contact to substrate. The active-site Proton donor/acceptor is cysteine 184. 185–186 (TH) serves as a coordination point for substrate.

This sequence belongs to the aspartate/glutamate racemases family.

It carries out the reaction L-glutamate = D-glutamate. It participates in cell wall biogenesis; peptidoglycan biosynthesis. In terms of biological role, provides the (R)-glutamate required for cell wall biosynthesis. The sequence is that of Glutamate racemase from Actinobacillus pleuropneumoniae serotype 3 (strain JL03).